A 723-amino-acid polypeptide reads, in one-letter code: Calpastatin (723 aa).

2 disordered regions span residues 1–402 and 422–509; these read MNPT…PGRC and STHS…LPPL. The span at 21 to 30 shows a compositional bias: basic residues; it reads PNKKRHKKQA. Residue Lys-32 forms a Glycyl lysine isopeptide (Lys-Gly) (interchain with G-Cter in SUMO2) linkage. Over residues 46-84 the composition is skewed to basic and acidic residues; that stretch reads VVHEKKTQEVKPKEHTEPKSQPKHPSDTRSKHAPKEKAV. Position 50 is an N6-acetyllysine (Lys-50). Composition is skewed to low complexity over residues 85-94 and 113-125; these read SKSSEQPPSE and SAVP…ASAE. Ser-87 is subject to Phosphoserine. The residue at position 137 (Thr-137) is a Phosphothreonine. Residues 157–173 show a composition bias toward acidic residues; it reads TALDDLIDTLGEPEETK. The stretch at 171–224 is one Inhibitory domain 1 repeat; it reads ETKEDTTTYTGPEVSDPMSSTYIEELGKREVTLPPKYRELLNKEEGIAGPPPDS. A compositionally biased stretch (basic and acidic residues) spans 195-216; that stretch reads ELGKREVTLPPKYRELLNKEEG. Ser-224 and Ser-245 each carry phosphoserine. Composition is skewed to basic and acidic residues over residues 249–263 and 306–367; these read DAKK…EEAL and PRPE…KPLS. An Inhibitory domain 2 repeat occupies 307 to 359; the sequence is RPELDPSSIKEVDEAKAKEEKVKKCGEDEERVPSEYRLKPATDKDGKPLLPEA. Residues Ser-367, Ser-369, and Ser-376 each carry the phosphoserine modification. The span at 378 to 396 shows a compositional bias: basic and acidic residues; that stretch reads DFDRSKCKEKQSKPTEKNR. At Ser-443 the chain carries Phosphoserine. A compositionally biased stretch (basic and acidic residues) spans 445–504; sequence GKKEADPEDGKPVEDKVKEKAKEEDREKLGEREETIPPDYRLEEAKDKDGKPLPPKEVKE. Residues 449 to 502 form an Inhibitory domain 3 repeat; sequence ADPEDGKPVEDKVKEKAKEEDREKLGEREETIPPDYRLEEAKDKDGKPLPPKEV. Ser-519 and Ser-530 each carry phosphoserine. A disordered region spans residues 547–723; the sequence is SQTPAPTTQA…KPKADGKSTS (177 aa). Low complexity predominate over residues 548-560; it reads QTPAPTTQAAGPP. The span at 562-571 shows a compositional bias: basic and acidic residues; it reads DSARDNKELD. Residues Ser-578 and Ser-580 each carry the phosphoserine modification. Residues 586 to 642 form an Inhibitory domain 4 repeat; sequence PDPDEHKPVEDKVKEKAKAEHRDKLGERDDTIPPKYQHLLDDNKEGTPGKPKRSESP. The span at 586-643 shows a compositional bias: basic and acidic residues; sequence PDPDEHKPVEDKVKEKAKAEHRDKLGERDDTIPPKYQHLLDDNKEGTPGKPKRSESPR. Residues 653–670 show a composition bias toward polar residues; that stretch reads NLQVPRTPLTPSQGTWTA. The segment covering 672-690 has biased composition (low complexity); the sequence is PQLQKPQQTQQRTKTRSLL. A compositionally biased stretch (basic and acidic residues) spans 701 to 723; it reads KAKDSTKAKEETSKPKADGKSTS.

The protein belongs to the protease inhibitor I27 (calpastatin) family.

In terms of biological role, specific inhibition of calpain (calcium-dependent cysteine protease). Plays a key role in postmortem tenderization of meat and have been proposed to be involved in muscle protein degradation in living tissue. The polypeptide is Calpastatin (CAST) (Ovis aries (Sheep)).